The primary structure comprises 146 residues: Hemoglobin subunit beta-2 (146 aa).

The Globin domain maps to phenylalanine 2–histidine 146. Residue lysine 17 is modified to N6-succinyllysine. A phosphoserine mark is found at serine 44 and serine 50. Lysine 59 carries the N6-succinyllysine modification. Heme b is bound by residues histidine 63 and histidine 92. The residue at position 104 (arginine 104) is an Asymmetric dimethylarginine.

It belongs to the globin family. In terms of assembly, heterotetramer of two alpha chains and two beta chains. As to expression, red blood cells.

Functionally, involved in oxygen transport from the lung to the various peripheral tissues. The protein is Hemoglobin subunit beta-2 (HBB2) of Panthera pardus saxicolor (Northern Persian leopard).